Consider the following 420-residue polypeptide: L-cysteine:1D-myo-inositol 2-amino-2-deoxy-alpha-D-glucopyranoside ligase (420 aa).

Position 48 (cysteine 48) interacts with Zn(2+). L-cysteinyl-5'-AMP contacts are provided by residues 48-51, threonine 63, and 86-88; these read CGIT and NIT. Positions 50 to 60 match the 'HIGH' region motif; the sequence is ITPYDSTHLGH. Residues 192–197 carry the 'ERGGDP' region motif; the sequence is ERGGDP. Tryptophan 232 serves as a coordination point for L-cysteinyl-5'-AMP. Zn(2+) is bound at residue cysteine 236. Residue 254-256 participates in L-cysteinyl-5'-AMP binding; sequence GSD. Histidine 261 provides a ligand contact to Zn(2+). Isoleucine 288 serves as a coordination point for L-cysteinyl-5'-AMP. The 'KMSKS' region signature appears at 294-298; sequence KMSKS.

The protein belongs to the class-I aminoacyl-tRNA synthetase family. MshC subfamily. Monomer. The cofactor is Zn(2+).

The enzyme catalyses 1D-myo-inositol 2-amino-2-deoxy-alpha-D-glucopyranoside + L-cysteine + ATP = 1D-myo-inositol 2-(L-cysteinylamino)-2-deoxy-alpha-D-glucopyranoside + AMP + diphosphate + H(+). Catalyzes the ATP-dependent condensation of GlcN-Ins and L-cysteine to form L-Cys-GlcN-Ins. The chain is L-cysteine:1D-myo-inositol 2-amino-2-deoxy-alpha-D-glucopyranoside ligase from Corynebacterium glutamicum (strain R).